The sequence spans 202 residues: Transcriptional regulator GfcR 2 (202 aa).

The protein belongs to the purine/pyrimidine phosphoribosyltransferase family. GfcR subfamily.

The polypeptide is Transcriptional regulator GfcR 2 (Methanosarcina barkeri (strain Fusaro / DSM 804)).